A 121-amino-acid polypeptide reads, in one-letter code: Putative iron-sulfur cluster insertion protein ErpA (121 aa).

Iron-sulfur cluster contacts are provided by cysteine 49, cysteine 113, and cysteine 115.

It belongs to the HesB/IscA family. In terms of assembly, homodimer. The cofactor is iron-sulfur cluster.

Required for insertion of 4Fe-4S clusters. This is Putative iron-sulfur cluster insertion protein ErpA from Paracidovorax citrulli (strain AAC00-1) (Acidovorax citrulli).